Reading from the N-terminus, the 119-residue chain is Ribosome-binding factor A (119 aa).

It belongs to the RbfA family. As to quaternary structure, monomer. Binds 30S ribosomal subunits, but not 50S ribosomal subunits or 70S ribosomes.

The protein resides in the cytoplasm. Its function is as follows. One of several proteins that assist in the late maturation steps of the functional core of the 30S ribosomal subunit. Associates with free 30S ribosomal subunits (but not with 30S subunits that are part of 70S ribosomes or polysomes). Required for efficient processing of 16S rRNA. May interact with the 5'-terminal helix region of 16S rRNA. The polypeptide is Ribosome-binding factor A (Pseudothermotoga lettingae (strain ATCC BAA-301 / DSM 14385 / NBRC 107922 / TMO) (Thermotoga lettingae)).